The chain runs to 504 residues: Trifunctional (S)-stylopine synthase/(S)-nandinine synthase/(S)-canadine synthase (504 aa).

Residues 16-36 (SSTTTTTTILLSLLFTIFIIL) form a helical membrane-spanning segment. Cys-448 contributes to the heme binding site.

Belongs to the cytochrome P450 family. It depends on heme as a cofactor. Expressed in roots and at lower levels in stems, leaves and plantlets.

It localises to the endoplasmic reticulum membrane. It carries out the reaction (S)-cheilanthifoline + reduced [NADPH--hemoprotein reductase] + O2 = (S)-stylopine + oxidized [NADPH--hemoprotein reductase] + 2 H2O + H(+). The enzyme catalyses (S)-tetrahydrocolumbamine + reduced [NADPH--hemoprotein reductase] + O2 = (S)-canadine + oxidized [NADPH--hemoprotein reductase] + 2 H2O + H(+). The catalysed reaction is (S)-scoulerine + reduced [NADPH--hemoprotein reductase] + O2 = (S)-nandinine + oxidized [NADPH--hemoprotein reductase] + 2 H2O + H(+). Its function is as follows. Methylenedioxy bridge-forming cytochrome P450 involved in the biosynthesis of isoquinoline alkaloids. Converts (S)-cheilanthifoline to (S)-stylopine, (S)-scoulerine to (S)-nandinine and (S)-tetrahydrocolumbamine to (S)-canadine. Can be involved in both sanguinarine and berberine biosynthesis. Catalyzes an oxidative reaction that does not incorporate oxygen into the product. The chain is Trifunctional (S)-stylopine synthase/(S)-nandinine synthase/(S)-canadine synthase from Argemone mexicana (Mexican prickly poppy).